A 61-amino-acid chain; its full sequence is Large ribosomal subunit protein bL32 (61 aa).

Over residues 1-16 (MAVPKKKTSKSRKNMR) the composition is skewed to basic residues. Residues 1–20 (MAVPKKKTSKSRKNMRRAHD) are disordered.

It belongs to the bacterial ribosomal protein bL32 family.

The sequence is that of Large ribosomal subunit protein bL32 from Pelobacter propionicus (strain DSM 2379 / NBRC 103807 / OttBd1).